Consider the following 311-residue polypeptide: Aspartate carbamoyltransferase catalytic subunit (311 aa).

Residues Arg-55 and Thr-56 each coordinate carbamoyl phosphate. Lys-85 contacts L-aspartate. Arg-106, His-135, and Gln-138 together coordinate carbamoyl phosphate. L-aspartate-binding residues include Arg-168 and Arg-230. Carbamoyl phosphate-binding residues include Leu-268 and Pro-269.

Belongs to the aspartate/ornithine carbamoyltransferase superfamily. ATCase family. In terms of assembly, heterododecamer (2C3:3R2) of six catalytic PyrB chains organized as two trimers (C3), and six regulatory PyrI chains organized as three dimers (R2).

It carries out the reaction carbamoyl phosphate + L-aspartate = N-carbamoyl-L-aspartate + phosphate + H(+). It participates in pyrimidine metabolism; UMP biosynthesis via de novo pathway; (S)-dihydroorotate from bicarbonate: step 2/3. Functionally, catalyzes the condensation of carbamoyl phosphate and aspartate to form carbamoyl aspartate and inorganic phosphate, the committed step in the de novo pyrimidine nucleotide biosynthesis pathway. The polypeptide is Aspartate carbamoyltransferase catalytic subunit (Yersinia pseudotuberculosis serotype IB (strain PB1/+)).